The primary structure comprises 300 residues: Putative S-adenosyl-L-methionine-dependent methyltransferase MMAR_1058 (300 aa).

S-adenosyl-L-methionine-binding positions include aspartate 127 and 156–157 (DL).

Belongs to the UPF0677 family.

Its function is as follows. Exhibits S-adenosyl-L-methionine-dependent methyltransferase activity. The sequence is that of Putative S-adenosyl-L-methionine-dependent methyltransferase MMAR_1058 from Mycobacterium marinum (strain ATCC BAA-535 / M).